Here is a 557-residue protein sequence, read N- to C-terminus: 2,3-bisphosphoglycerate-independent phosphoglycerate mutase 1 (557 aa).

Positions 27 and 80 each coordinate Mn(2+). Residue Ser-80 is the Phosphoserine intermediate of the active site. Substrate contacts are provided by residues His-139, Arg-169–Asp-170, Arg-205, Arg-212, Arg-285–Arg-288, and Lys-360. Residues Asp-429, His-433, Asp-470, His-471, and His-500 each coordinate Mn(2+).

This sequence belongs to the BPG-independent phosphoglycerate mutase family. In terms of assembly, monomer. Mn(2+) serves as cofactor.

It localises to the cytoplasm. It carries out the reaction (2R)-2-phosphoglycerate = (2R)-3-phosphoglycerate. Its pathway is carbohydrate degradation; glycolysis; pyruvate from D-glyceraldehyde 3-phosphate: step 3/5. Functionally, catalyzes the interconversion of 2-phosphoglycerate (2-PGA) and 3-phosphoglycerate (3-PGA). Required for guard cell function (e.g. blue light-, abscisic acid- (ABA), and low CO(2)-regulated stomatal movements) and fertility (e.g. pollen grains production). This chain is 2,3-bisphosphoglycerate-independent phosphoglycerate mutase 1 (PGM1), found in Arabidopsis thaliana (Mouse-ear cress).